We begin with the raw amino-acid sequence, 166 residues long: Large ribosomal subunit protein uL10 (166 aa).

The protein belongs to the universal ribosomal protein uL10 family. As to quaternary structure, part of the ribosomal stalk of the 50S ribosomal subunit. The N-terminus interacts with L11 and the large rRNA to form the base of the stalk. The C-terminus forms an elongated spine to which L12 dimers bind in a sequential fashion forming a multimeric L10(L12)X complex.

Its function is as follows. Forms part of the ribosomal stalk, playing a central role in the interaction of the ribosome with GTP-bound translation factors. This chain is Large ribosomal subunit protein uL10, found in Shewanella oneidensis (strain ATCC 700550 / JCM 31522 / CIP 106686 / LMG 19005 / NCIMB 14063 / MR-1).